Consider the following 262-residue polypeptide: High-affinity zinc uptake system membrane protein ZnuB (262 aa).

7 helical membrane passes run 8–28 (GWLA…FIVW), 54–74 (INSF…LAWL), 84–104 (TVLN…ISLI), 129–149 (ITIS…WHSI), 179–199 (FTIA…LLII), 215–235 (VIIA…LSVF), and 238–254 (TPAS…LCLI).

It belongs to the ABC-3 integral membrane protein family.

The protein resides in the cell membrane. Involved in the high-affinity zinc uptake transport system. The polypeptide is High-affinity zinc uptake system membrane protein ZnuB (znuB) (Buchnera aphidicola subsp. Acyrthosiphon pisum (strain APS) (Acyrthosiphon pisum symbiotic bacterium)).